A 91-amino-acid chain; its full sequence is Probable Fe(2+)-trafficking protein (91 aa).

It belongs to the Fe(2+)-trafficking protein family.

Functionally, could be a mediator in iron transactions between iron acquisition and iron-requiring processes, such as synthesis and/or repair of Fe-S clusters in biosynthetic enzymes. In Xanthomonas axonopodis pv. citri (strain 306), this protein is Probable Fe(2+)-trafficking protein.